A 205-amino-acid polypeptide reads, in one-letter code: MTISNATQLICFFALSATLILGALGVVLLPNIVYSAFLLGSVFLSVAGLYLLLNASFVAAAQVLIYVGAVNVLILFAIMLVNREEELKVIPGLAIRRFFSGVVCMGLLVILERIATTTHWAQVGPIPLGEEATIRIGEHLFSDYLLPFELASILLLIAMIGAIVLARKDLVDLKPIIEQRIDPKEIKLPSSSMFRKKSKKLTDMG.

Helical transmembrane passes span 9-29 (LICF…VVLL), 32-52 (IVYS…LYLL), 61-81 (AQVL…IMLV), 90-110 (IPGL…LLVI), and 145-165 (LLPF…AIVL).

This sequence belongs to the complex I subunit 6 family. As to quaternary structure, NDH is composed of at least 16 different subunits, 5 of which are encoded in the nucleus.

It is found in the plastid. The protein localises to the organellar chromatophore thylakoid membrane. The enzyme catalyses a plastoquinone + NADH + (n+1) H(+)(in) = a plastoquinol + NAD(+) + n H(+)(out). The catalysed reaction is a plastoquinone + NADPH + (n+1) H(+)(in) = a plastoquinol + NADP(+) + n H(+)(out). In terms of biological role, NDH shuttles electrons from NAD(P)H:plastoquinone, via FMN and iron-sulfur (Fe-S) centers, to quinones in the photosynthetic chain and possibly in a chloroplast respiratory chain. The immediate electron acceptor for the enzyme in this species is believed to be plastoquinone. Couples the redox reaction to proton translocation, and thus conserves the redox energy in a proton gradient. The protein is NAD(P)H-quinone oxidoreductase subunit 6, organellar chromatophore (ndhG) of Paulinella chromatophora.